The following is a 484-amino-acid chain: mRNA decay activator protein ZFP36L2 (484 aa).

Residues S57 and S127 each carry the phosphoserine modification. The disordered stretch occupies residues 100–152; it reads YGQLKEPSGGSGTALVTKESKFRDRSFSENGERSQHLLHLQQQQKGGSGSQIN. Positions 117-134 are enriched in basic and acidic residues; sequence KESKFRDRSFSENGERSQ. An RNA-binding motif is present at residues 155–160; the sequence is RYKTEL. 2 C3H1-type zinc fingers span residues 155-183 and 193-221; these read RYKTELCRPFEESGTCKYGEKCQFAHGFH and KYKTELCRTFHTIGFCPYGPRCHFIHNAD. The interval 172-213 is RNA-binding; that stretch reads YGEKCQFAHGFHELRSLTRHPKYKTELCRTFHTIGFCPYGPR. Disordered regions lie at residues 261-304 and 395-484; these read SLSF…SCSS and QQGL…ISDD. Pro residues predominate over residues 401-418; it reads PAPPPAQPPAAPAPPSPP. Residues 449–468 are compositionally biased toward low complexity; it reads YLSGSLSSGSLSGSESPSLD. A phosphoserine; by RPS6KA1 mark is found at S480 and S482.

In terms of assembly, associates with the cytoplasmic CCR4-NOT deadenylase to trigger ARE-containing mRNA deadenylation and decay processes. Interacts with CNOT7; this interaction is inhibited in response to phorbol 12-myristate 13-acetate (PMA) treatment in a p38 MAPK-dependent manner. Interacts with CNOT6L. Phosphorylated by RPS6KA1 at Ser-480 and Ser-482 upon phorbol 12-myristate 13-acetate (PMA) treatment; this phosphorylation results in dissociation of the CCR4-NOT-deadenylase complex and induces p38 MAPK-mediated stabilization of the low-density lipoprotein (LDL) receptor (LDLR) mRNA. Phosphorylation occurs during early preadipocyte differentiation. As to expression, expressed in preadipocytes and adipocytes (at protein level). Expressed at highest level in lymphoid tissues such as thymus, spleen, lung, uterus, ovary, small and large intestine, mammary gland, fat and bone marrow. Expressed at intermediate level in kidney, heart, adrenal, eye and fetal liver. Weakly expressed in brain, skeletal muscle and liver. Expressed through B lymphocyte development. Expressed in superior cervical ganglion (SCG) and dorsal root ganglion (DRG). Expressed in embryonic stem cells (ESCs). Expressed in oocytes.

The protein resides in the nucleus. Its subcellular location is the cytoplasm. Its function is as follows. Zinc-finger RNA-binding protein that destabilizes several cytoplasmic AU-rich element (ARE)-containing mRNA transcripts by promoting their poly(A) tail removal or deadenylation, and hence provide a mechanism for attenuating protein synthesis. Acts as a 3'-untranslated region (UTR) ARE mRNA-binding adapter protein to communicate signaling events to the mRNA decay machinery. Functions by recruiting the CCR4-NOT deadenylase complex and probably other components of the cytoplasmic RNA decay machinery to the bound ARE-containing mRNAs, and hence promotes ARE-mediated mRNA deadenylation and decay processes. Binds to 3'-UTR ARE of numerous mRNAs. Promotes ARE-containing mRNA decay of the low-density lipoprotein (LDL) receptor (LDLR) mRNA in response to phorbol 12-myristate 13-acetate (PMA) treatment in a p38 MAPK-dependent manner. Positively regulates early adipogenesis by promoting ARE-mediated mRNA decay of immediate early genes (IEGs). Plays a role in mature peripheral neuron integrity by promoting ARE-containing mRNA decay of the transcriptional repressor REST mRNA. Plays a role in ovulation and oocyte meiotic maturation by promoting ARE-mediated mRNA decay of the luteinizing hormone receptor LHCGR mRNA. Acts as a negative regulator of erythroid cell differentiation: promotes glucocorticoid-induced self-renewal of erythroid cells by binding mRNAs that are induced or highly expressed during terminal erythroid differentiation and promotes their degradation, preventing erythroid cell differentiation. In association with ZFP36L1 maintains quiescence on developing B lymphocytes by promoting ARE-mediated decay of several mRNAs encoding cell cycle regulators that help B cells progress through the cell cycle, and hence ensuring accurate variable-diversity-joining (VDJ) recombination process and functional immune cell formation. Together with ZFP36L1 is also necessary for thymocyte development and prevention of T-cell acute lymphoblastic leukemia (T-ALL) transformation by promoting ARE-mediated mRNA decay of the oncogenic transcription factor NOTCH1 mRNA. The sequence is that of mRNA decay activator protein ZFP36L2 from Mus musculus (Mouse).